A 233-amino-acid polypeptide reads, in one-letter code: Peptidyl-tRNA hydrolase (233 aa).

Tyr-14 serves as a coordination point for tRNA. His-19 serves as the catalytic Proton acceptor. Phe-64, Asn-66, and Asn-112 together coordinate tRNA. Residues 187–233 (VSPRRSGTGQKGKDKPPAPAKQQATATKAEPEPDTRSALQKLMERFK) are disordered.

The protein belongs to the PTH family. As to quaternary structure, monomer.

It localises to the cytoplasm. It carries out the reaction an N-acyl-L-alpha-aminoacyl-tRNA + H2O = an N-acyl-L-amino acid + a tRNA + H(+). In terms of biological role, hydrolyzes ribosome-free peptidyl-tRNAs (with 1 or more amino acids incorporated), which drop off the ribosome during protein synthesis, or as a result of ribosome stalling. Catalyzes the release of premature peptidyl moieties from peptidyl-tRNA molecules trapped in stalled 50S ribosomal subunits, and thus maintains levels of free tRNAs and 50S ribosomes. The sequence is that of Peptidyl-tRNA hydrolase from Roseobacter denitrificans (strain ATCC 33942 / OCh 114) (Erythrobacter sp. (strain OCh 114)).